A 271-amino-acid polypeptide reads, in one-letter code: MFRSLAKLRCFASSLGLSSHKNIKSVPLIRNIHYIPDNPSYFTQNARFNEIYLHLENILKFAPKIIAAEEDVPKKWKTLEQYQKEFSDPKTTKVGYRKITRLLNELNEIVPEYRTEAVQKALEKFIRPDIVVKTTLKSQMLDENGMSITKGKRKSSKATVKMLPGTGKFYVNGSPFDVYFQRMVHRKHAVYPLAACNRLTNYNVWATVHGGGPTGQSGAVHAAISKSLILQEPSLKQVIKDTHCVLNDKRKVERKKTGQPKARKKYTWVKR.

A mitochondrion-targeting transit peptide spans 1-11 (MFRSLAKLRCF). Residues 251-271 (KVERKKTGQPKARKKYTWVKR) are disordered. Residues 252 to 271 (VERKKTGQPKARKKYTWVKR) are compositionally biased toward basic residues.

The protein belongs to the universal ribosomal protein uS9 family. In terms of assembly, component of the mitochondrial small ribosomal subunit (mt-SSU). Mature yeast 74S mitochondrial ribosomes consist of a small (37S) and a large (54S) subunit. The 37S small subunit contains a 15S ribosomal RNA (15S mt-rRNA) and at least 32 different proteins. The 54S large subunit contains a 21S rRNA (21S mt-rRNA) and at least 45 different proteins.

Its subcellular location is the mitochondrion. In terms of biological role, component of the mitochondrial ribosome (mitoribosome), a dedicated translation machinery responsible for the synthesis of mitochondrial genome-encoded proteins, including at least some of the essential transmembrane subunits of the mitochondrial respiratory chain. The mitoribosomes are attached to the mitochondrial inner membrane and translation products are cotranslationally integrated into the membrane. This Schizosaccharomyces pombe (strain 972 / ATCC 24843) (Fission yeast) protein is Small ribosomal subunit protein uS9m (mrps9).